Consider the following 130-residue polypeptide: Protein UL145 (130 aa).

As to quaternary structure, interacts with host DDB1; this interaction promotes STAT2 degradation.

Its function is as follows. Plays a role in the inhibition of host innate immunity by exploiting host DDB1-cullin RING ubiquitin ligases (CRLs). Mechanistically, recruits host DDB1 via a DCAF-like interaction motif to antagonize IFN signaling by STAT2 degradation. This Homo sapiens (Human) protein is Protein UL145 (UL145).